The following is a 313-amino-acid chain: Ornithine carbamoyltransferase (313 aa).

Carbamoyl phosphate-binding positions include Ser-57–Thr-60, Arg-108, and His-135–Gln-138. L-ornithine-binding positions include Asn-167, Asp-231, and Ser-235 to Met-236. Carbamoyl phosphate is bound by residues Cys-272 to Leu-273 and Arg-300.

This sequence belongs to the aspartate/ornithine carbamoyltransferase superfamily. OTCase family.

It localises to the cytoplasm. It carries out the reaction carbamoyl phosphate + L-ornithine = L-citrulline + phosphate + H(+). It participates in amino-acid biosynthesis; L-arginine biosynthesis; L-arginine from L-ornithine and carbamoyl phosphate: step 1/3. Its function is as follows. Reversibly catalyzes the transfer of the carbamoyl group from carbamoyl phosphate (CP) to the N(epsilon) atom of ornithine (ORN) to produce L-citrulline. The protein is Ornithine carbamoyltransferase of Thermotoga maritima (strain ATCC 43589 / DSM 3109 / JCM 10099 / NBRC 100826 / MSB8).